The following is a 110-amino-acid chain: NADH-quinone oxidoreductase subunit K (110 aa).

A run of 3 helical transmembrane segments spans residues Leu13 to Met33, Ile41 to Val61, and Ile73 to Tyr93.

Belongs to the complex I subunit 4L family. In terms of assembly, NDH-1 is composed of 14 different subunits. Subunits NuoA, H, J, K, L, M, N constitute the membrane sector of the complex.

It is found in the cell inner membrane. It carries out the reaction a quinone + NADH + 5 H(+)(in) = a quinol + NAD(+) + 4 H(+)(out). Its function is as follows. NDH-1 shuttles electrons from NADH, via FMN and iron-sulfur (Fe-S) centers, to quinones in the respiratory chain. The immediate electron acceptor for the enzyme in this species is believed to be ubiquinone. Couples the redox reaction to proton translocation (for every two electrons transferred, four hydrogen ions are translocated across the cytoplasmic membrane), and thus conserves the redox energy in a proton gradient. This chain is NADH-quinone oxidoreductase subunit K, found in Rickettsia typhi (strain ATCC VR-144 / Wilmington).